Consider the following 325-residue polypeptide: Natural cytotoxicity triggering receptor 1 (325 aa).

Positions 1-16 (MLPTLTALLCLGLCLS) are cleaved as a signal peptide. Topologically, residues 17-255 (QRINTEKETL…SAFWDHTTQN (239 aa)) are extracellular. Ig-like domains follow at residues 34 to 118 (KPSI…LVVT) and 129 to 211 (YPRP…LLIT). The cysteines at positions 49 and 98 are disulfide-linked. Asparagine 139 carries an N-linked (GlcNAc...) asparagine glycan. Cysteine 144 and cysteine 190 are oxidised to a cystine. 2 N-linked (GlcNAc...) asparagine glycosylation sites follow: asparagine 216 and asparagine 238. Residues 256–273 (LIRIGLACIILITLVWLL) form a helical membrane-spanning segment. Residues 274–325 (TEDWLSKRKDHEEANRLTNWECRRRWRMQHYFEEEQRNAISMMELKATPGAL) lie on the Cytoplasmic side of the membrane.

This sequence belongs to the natural cytotoxicity receptor (NCR) family. As to quaternary structure, interacts with CD3Z and FCER1G. Selectively expressed by NK cells.

It is found in the cell membrane. Cytotoxicity-activating receptor that may contribute to the increased efficiency of activated natural killer (NK) cells to mediate tumor cell lysis. The polypeptide is Natural cytotoxicity triggering receptor 1 (Ncr1) (Mus musculus (Mouse)).